Reading from the N-terminus, the 300-residue chain is Putative 1-phosphofructokinase (300 aa).

ATP-binding positions include serine 214–glycine 219 and glycine 246–aspartate 247. The Proton acceptor role is filled by aspartate 247.

The protein belongs to the carbohydrate kinase PfkB family.

The enzyme catalyses beta-D-fructose 1-phosphate + ATP = beta-D-fructose 1,6-bisphosphate + ADP + H(+). Functionally, catalyzes the ATP-dependent phosphorylation of fructose-l-phosphate to fructose-l,6-bisphosphate. The chain is Putative 1-phosphofructokinase (fruK) from Mycoplasma pneumoniae (strain ATCC 29342 / M129 / Subtype 1) (Mycoplasmoides pneumoniae).